The sequence spans 160 residues: Cytochrome b6-f complex subunit 4 (160 aa).

A run of 3 helical transmembrane segments spans residues 36–56, 95–115, and 131–151; these read LLYI…GLAV, LLGV…PFLE, and TVFL…TLPI.

It belongs to the cytochrome b family. PetD subfamily. As to quaternary structure, the 4 large subunits of the cytochrome b6-f complex are cytochrome b6, subunit IV (17 kDa polypeptide, petD), cytochrome f and the Rieske protein, while the 4 small subunits are petG, petL, petM and petN. The complex functions as a dimer.

The protein resides in the plastid. The protein localises to the chloroplast thylakoid membrane. In terms of biological role, component of the cytochrome b6-f complex, which mediates electron transfer between photosystem II (PSII) and photosystem I (PSI), cyclic electron flow around PSI, and state transitions. This is Cytochrome b6-f complex subunit 4 from Pisum sativum (Garden pea).